Here is a 504-residue protein sequence, read N- to C-terminus: UDP-N-acetylmuramoylalanine--D-glutamate ligase (504 aa).

129-135 (GTNGKTT) contributes to the ATP binding site.

The protein belongs to the MurCDEF family.

The protein resides in the cytoplasm. The catalysed reaction is UDP-N-acetyl-alpha-D-muramoyl-L-alanine + D-glutamate + ATP = UDP-N-acetyl-alpha-D-muramoyl-L-alanyl-D-glutamate + ADP + phosphate + H(+). It participates in cell wall biogenesis; peptidoglycan biosynthesis. Functionally, cell wall formation. Catalyzes the addition of glutamate to the nucleotide precursor UDP-N-acetylmuramoyl-L-alanine (UMA). The chain is UDP-N-acetylmuramoylalanine--D-glutamate ligase from Burkholderia thailandensis (strain ATCC 700388 / DSM 13276 / CCUG 48851 / CIP 106301 / E264).